The primary structure comprises 60 residues: Cecropin-B1 (60 aa).

Positions 1-24 are cleaved as a signal peptide; it reads MNFSKVFALVLLIGLVLLTGHTEA.

This sequence belongs to the cecropin family.

It localises to the secreted. In terms of biological role, putative antimicrobial peptide. Partially neutralizes lipopolysaccharides (LPS). Exhibits anti-inflammatory properties: inhibits LPS-induced iNOS/NOS2 transcription, nitric oxide (NO) and pro-inflammatory cytokine production in mouse macrophages and human peripheral blood mononuclear cells (PBMCs); inhibits LPS-induced activation of MAPK and NF-kappa-B signaling pathways in mouse macrophages. This Aedes aegypti (Yellowfever mosquito) protein is Cecropin-B1.